Consider the following 446-residue polypeptide: tRNA-2-methylthio-N(6)-dimethylallyladenosine synthase (446 aa).

Residues 8–124 (KTYRVKSFGC…LPGMIDAAVA (117 aa)) form the MTTase N-terminal domain. [4Fe-4S] cluster-binding residues include C17, C53, C87, C160, C164, and C167. The region spanning 146–378 (RKSAPSAFLT…QAALNRDQAA (233 aa)) is the Radical SAM core domain. Residues 381-442 (AGSVGRTCEV…PNSLAGQLLE (62 aa)) form the TRAM domain.

It belongs to the methylthiotransferase family. MiaB subfamily. In terms of assembly, monomer. Requires [4Fe-4S] cluster as cofactor.

The protein localises to the cytoplasm. It catalyses the reaction N(6)-dimethylallyladenosine(37) in tRNA + (sulfur carrier)-SH + AH2 + 2 S-adenosyl-L-methionine = 2-methylsulfanyl-N(6)-dimethylallyladenosine(37) in tRNA + (sulfur carrier)-H + 5'-deoxyadenosine + L-methionine + A + S-adenosyl-L-homocysteine + 2 H(+). Its function is as follows. Catalyzes the methylthiolation of N6-(dimethylallyl)adenosine (i(6)A), leading to the formation of 2-methylthio-N6-(dimethylallyl)adenosine (ms(2)i(6)A) at position 37 in tRNAs that read codons beginning with uridine. The protein is tRNA-2-methylthio-N(6)-dimethylallyladenosine synthase of Erythrobacter litoralis (strain HTCC2594).